We begin with the raw amino-acid sequence, 277 residues long: Nickel transport system permease protein NikC (277 aa).

Topologically, residues Met-1–Arg-12 are cytoplasmic. The helical transmembrane segment at Leu-13–Pro-33 threads the bilayer. The Periplasmic segment spans residues Tyr-34–Val-78. Residues Leu-67 to Gly-260 enclose the ABC transmembrane type-1 domain. The helical transmembrane segment at Met-79–Ile-99 threads the bilayer. Residues Gly-100 to Ser-120 lie on the Cytoplasmic side of the membrane. A helical membrane pass occupies residues Ile-121 to Ile-141. Residues Ala-142 to His-183 are Periplasmic-facing. Residues Leu-184–Met-204 traverse the membrane as a helical segment. Over Leu-205–Val-207 the chain is Cytoplasmic. Residues Ala-208–Ile-228 traverse the membrane as a helical segment. Residues Asn-229–Pro-239 are Periplasmic-facing. The helical transmembrane segment at Leu-240–Gly-260 threads the bilayer. Residues Asp-261 to His-277 lie on the Cytoplasmic side of the membrane.

The protein belongs to the binding-protein-dependent transport system permease family. OppBC subfamily. As to quaternary structure, probably forms a heterodimeric pore with NikB.

The protein localises to the cell inner membrane. Involved in a nickel transport system, probably translocates nickel through the bacterial inner membrane. The sequence is that of Nickel transport system permease protein NikC (nikC) from Escherichia coli O157:H7.